The following is a 95-amino-acid chain: Parvalbumin alpha (95 aa).

At serine 19 the chain carries Phosphoserine. 2 consecutive EF-hand domains span residues lysine 34–aspartate 69 and leucine 73–alanine 95. Ca(2+)-binding residues include aspartate 47, aspartate 49, serine 51, phenylalanine 53, glutamate 55, glutamate 58, aspartate 86, aspartate 88, aspartate 90, and lysine 92.

It belongs to the parvalbumin family.

In terms of biological role, in muscle, parvalbumin is thought to be involved in relaxation after contraction. It binds two calcium ions. In Cavia porcellus (Guinea pig), this protein is Parvalbumin alpha (PVALB).